Consider the following 471-residue polypeptide: Secretogranin-3 (471 aa).

Residues 1-22 (MGFLWTGTWIVVLMLHSSPIQA) form the signal peptide. Disordered stretches follow at residues 23–72 (FPKP…ESNY) and 86–105 (EKEK…NDNK). Residues 32 to 45 (KPLHNRELSAERPL) show a composition bias toward basic and acidic residues. Position 40 is a phosphoserine (S40). A glycan (O-linked (Xyl...) (chondroitin sulfate) serine) is linked at S40. Residue N71 is glycosylated (N-linked (GlcNAc...) asparagine). Over residues 86 to 96 (EKEKNEKERQS) the composition is skewed to basic and acidic residues. N-linked (GlcNAc...) asparagine glycosylation occurs at N353. The tract at residues 357 to 409 (LFAVPSEKSHEETDSTKEEAAKMEKEYGTLKDSTKDDDSNPRGKTDEHKGKTE) is disordered. The segment covering 363 to 409 (EKSHEETDSTKEEAAKMEKEYGTLKDSTKDDDSNPRGKTDEHKGKTE) has biased composition (basic and acidic residues). The residue at position 365 (S365) is a Phosphoserine.

In terms of assembly, interacts with CHGA. Interacts with secretogranin II/SCG2. Interacts (via C-terminus) with CPE.

It is found in the cytoplasmic vesicle. Its subcellular location is the secretory vesicle. The protein localises to the secretory vesicle membrane. The protein resides in the secreted. In terms of biological role, member of the granin protein family that regulates the biogenesis of secretory granules. Acts as a sorting receptor for intragranular proteins including chromogranin A/CHGA. May also play a role in angiogenesis. Promotes endothelial proliferation, migration and tube formation through MEK/ERK signaling pathway. This Bos taurus (Bovine) protein is Secretogranin-3 (SCG3).